Here is a 92-residue protein sequence, read N- to C-terminus: MKLCVTVLSLLVLAAAFCSPALSAPMGSDPPTSCCFSYTARKLPRNFVVDYYETSSLCSQPAVVFQTKRGKQVCADPSETWVQEYVNDLELN.

The first 23 residues, 1 to 23 (MKLCVTVLSLLVLAAAFCSPALS), serve as a signal peptide directing secretion. 2 disulfides stabilise this stretch: Cys34–Cys58 and Cys35–Cys74.

It belongs to the intercrine beta (chemokine CC) family. As to quaternary structure, homodimer. Interacts with CCR5. In terms of tissue distribution, detected in peripheral blood mononuclear cells and lymph nodes.

Its subcellular location is the secreted. Monokine with inflammatory and chemokinetic properties. This is C-C motif chemokine 4 (CCL4) from Macaca mulatta (Rhesus macaque).